Consider the following 122-residue polypeptide: Probable DNA-directed RNA polymerase II subunit RPB11 (122 aa).

This sequence belongs to the archaeal Rpo11/eukaryotic RPB11/RPC19 RNA polymerase subunit family. Component of the RNA polymerase II (Pol II) complex consisting of 12 subunits.

It is found in the nucleus. DNA-dependent RNA polymerase catalyzes the transcription of DNA into RNA using the four ribonucleoside triphosphates as substrates. Component of RNA polymerase II which synthesizes mRNA precursors and many functional non-coding RNAs. Pol II is the central component of the basal RNA polymerase II transcription machinery. It is composed of mobile elements that move relative to each other. RPB11 is part of the core element with the central large cleft. The polypeptide is Probable DNA-directed RNA polymerase II subunit RPB11 (rpb-11) (Caenorhabditis elegans).